Reading from the N-terminus, the 118-residue chain is Immunoglobulin heavy variable 4-30-2 (118 aa).

Residues 1–19 form the signal peptide; sequence MKHLWFFLLLVAAPRWVLS. Residues 20 to 44 form a framework-1 region; sequence QLQLQESGSGLVKPSQTLSLTCAVS. Positions 20-118 constitute an Ig-like domain; the sequence is QLQLQESGSG…ADTAVYYCAR (99 aa). Cysteine 41 and cysteine 116 are joined by a disulfide. The segment at 45-54 is complementarity-determining-1; sequence GGSISSGGYS. The segment at 55–71 is framework-2; sequence WSWIRQPPGKGLEWIGY. Residues 72 to 78 are complementarity-determining-2; it reads IYHSGST. A framework-3 region spans residues 79–116; sequence YYNPSLKSRVTISVDRSKNQFSLKLSSVTAADTAVYYC. Residues 117–118 are complementarity-determining-3; sequence AR.

In terms of assembly, immunoglobulins are composed of two identical heavy chains and two identical light chains; disulfide-linked.

Its subcellular location is the secreted. It is found in the cell membrane. Its function is as follows. V region of the variable domain of immunoglobulin heavy chains that participates in the antigen recognition. Immunoglobulins, also known as antibodies, are membrane-bound or secreted glycoproteins produced by B lymphocytes. In the recognition phase of humoral immunity, the membrane-bound immunoglobulins serve as receptors which, upon binding of a specific antigen, trigger the clonal expansion and differentiation of B lymphocytes into immunoglobulins-secreting plasma cells. Secreted immunoglobulins mediate the effector phase of humoral immunity, which results in the elimination of bound antigens. The antigen binding site is formed by the variable domain of one heavy chain, together with that of its associated light chain. Thus, each immunoglobulin has two antigen binding sites with remarkable affinity for a particular antigen. The variable domains are assembled by a process called V-(D)-J rearrangement and can then be subjected to somatic hypermutations which, after exposure to antigen and selection, allow affinity maturation for a particular antigen. This Homo sapiens (Human) protein is Immunoglobulin heavy variable 4-30-2.